Here is a 220-residue protein sequence, read N- to C-terminus: Claudin-22 (220 aa).

Topologically, residues 1–10 (MALVFRTVAQ) are cytoplasmic. A helical membrane pass occupies residues 11–30 (LAGVSLSLLGWVLSCLTNYL). Residues 31 to 81 (PHWKNLNLDLNEMENWTMGLWQTCVIQEEVGMQCKDFDSFLALPAELRVSR) lie on the Extracellular side of the membrane. A helical transmembrane segment spans residues 82-102 (ILMFLSNGLGFLGLLVSGFGL). Residues 103-117 (DCLRIGESQRDLKRR) are Cytoplasmic-facing. Residues 118-138 (LLILGGILSWASGVTALVPVS) traverse the membrane as a helical segment. Residues 139-164 (WVAHKTVQEFWDENVPDFVPRWEFGE) are Extracellular-facing. A helical membrane pass occupies residues 165 to 185 (ALFLGWFAGLSLLLGGCLLHC). Topologically, residues 186-220 (AACSSHAPLASGHYAVAQTQDHHQELETRNTNLKH) are cytoplasmic.

Belongs to the claudin family.

The protein localises to the cell junction. It localises to the tight junction. The protein resides in the cell membrane. Plays a major role in tight junction-specific obliteration of the intercellular space, through calcium-independent cell-adhesion activity. This chain is Claudin-22 (CLDN22), found in Homo sapiens (Human).